The sequence spans 187 residues: Ribonuclease HII (187 aa).

The region spanning 1–187 is the RNase H type-2 domain; the sequence is MIILGIDEAG…YKPVQVLLNE (187 aa). A divalent metal cation is bound by residues Asp7, Glu8, and Asp99.

It belongs to the RNase HII family. The cofactor is Mn(2+). Mg(2+) serves as cofactor.

It is found in the cytoplasm. It carries out the reaction Endonucleolytic cleavage to 5'-phosphomonoester.. Endonuclease that specifically degrades the RNA of RNA-DNA hybrids. This chain is Ribonuclease HII, found in Francisella tularensis subsp. mediasiatica (strain FSC147).